Here is a 145-residue protein sequence, read N- to C-terminus: Small ribosomal subunit protein uS12 (145 aa).

The protein belongs to the universal ribosomal protein uS12 family. In terms of assembly, component of the small ribosomal subunit. Mature ribosomes consist of a small (40S) and a large (60S) subunit. The 40S subunit contains about 32 different proteins and 1 molecule of RNA (18S). The 60S subunit contains 45 different proteins and 3 molecules of RNA (25S, 5.8S and 5S).

It is found in the cytoplasm. Its function is as follows. Component of the ribosome, a large ribonucleoprotein complex responsible for the synthesis of proteins in the cell. The small ribosomal subunit (SSU) binds messenger RNAs (mRNAs) and translates the encoded message by selecting cognate aminoacyl-transfer RNA (tRNA) molecules. The large subunit (LSU) contains the ribosomal catalytic site termed the peptidyl transferase center (PTC), which catalyzes the formation of peptide bonds, thereby polymerizing the amino acids delivered by tRNAs into a polypeptide chain. The nascent polypeptides leave the ribosome through a tunnel in the LSU and interact with protein factors that function in enzymatic processing, targeting, and the membrane insertion of nascent chains at the exit of the ribosomal tunnel. The sequence is that of Small ribosomal subunit protein uS12 (RPS23A) from Candida albicans (strain SC5314 / ATCC MYA-2876) (Yeast).